Reading from the N-terminus, the 119-residue chain is Beta-2-microglobulin (119 aa).

The signal sequence occupies residues 1 to 20 (MARFVVVALLVLLSLSGLEA). The Ig-like C1-type domain occupies 25 to 114 (PKIQVYSRHP…VTLSTPKTVK (90 aa)). An intrachain disulfide couples Cys-45 to Cys-100.

It belongs to the beta-2-microglobulin family. In terms of assembly, heterodimer of an alpha chain and a beta chain. Beta-2-microglobulin is the beta-chain of major histocompatibility complex class I molecules.

It localises to the secreted. Its function is as follows. Component of the class I major histocompatibility complex (MHC). Involved in the presentation of peptide antigens to the immune system. This Aotus azarae (Azara's night monkey) protein is Beta-2-microglobulin (B2M).